A 154-amino-acid polypeptide reads, in one-letter code: Protein X (154 aa).

Residues 68 to 117 (PCALRFTSARRMETTVNAHRNLPKVLHKRTLGLSAMSTTDLEAYFKDCVF) are mitochondrial targeting sequence.

This sequence belongs to the orthohepadnavirus protein X family. May form homodimer. May interact with host CEBPA, CFLAR, CREB1, DDB1, E4F1, HBXIP, HSPD1/HSP60, NFKBIA, POLR2E and SMAD4. Interacts with host SMC5-SMC6 complex and induces its degradation. Interacts with host TRPC4AP; leading to prevent ubiquitination of TRPC4AP. Interacts with host PLSCR1; this interaction promotes ubiquitination and degradation of HBx and impairs HBx-mediated cell proliferation. Post-translationally, a fraction may be phosphorylated in insect cells and HepG2 cells, a human hepatoblastoma cell line. Phosphorylated in vitro by host protein kinase C or mitogen-activated protein kinase. N-acetylated in insect cells.

The protein resides in the host cytoplasm. It localises to the host nucleus. Its subcellular location is the host mitochondrion. In terms of biological role, multifunctional protein that plays a role in silencing host antiviral defenses and promoting viral transcription. Does not seem to be essential for HBV infection. May be directly involved in development of cirrhosis and liver cancer (hepatocellular carcinoma). Most of cytosolic activities involve modulation of cytosolic calcium. The effect on apoptosis is controversial depending on the cell types in which the studies have been conducted. May induce apoptosis by localizing in mitochondria and causing loss of mitochondrial membrane potential. May also modulate apoptosis by binding host CFLAR, a key regulator of the death-inducing signaling complex (DISC). Promotes viral transcription by using the host E3 ubiquitin ligase DDB1 to target the SMC5-SMC6 complex to proteasomal degradation. This host complex would otherwise bind to viral episomal DNA, and prevents its transcription. Moderately stimulates transcription of many different viral and cellular transcription elements. Promoters and enhancers stimulated by HBx contain DNA binding sites for NF-kappa-B, AP-1, AP-2, c-EBP, ATF/CREB, or the calcium-activated factor NF-AT. This Hepatitis B virus genotype B1 subtype adw (isolate Japan/pJDW233/1988) (HBV-B) protein is Protein X.